We begin with the raw amino-acid sequence, 147 residues long: Myoglobin (147 aa).

Positions 2 to 141 constitute a Globin domain; that stretch reads ADHDLVLKCW…VIGDIDGYYK (140 aa). His-60 contributes to the nitrite binding site. His-60 serves as a coordination point for O2. His-89 is a binding site for heme b.

This sequence belongs to the globin family. As to quaternary structure, monomeric.

Its subcellular location is the cytoplasm. The protein resides in the sarcoplasm. The enzyme catalyses Fe(III)-heme b-[protein] + nitric oxide + H2O = Fe(II)-heme b-[protein] + nitrite + 2 H(+). It carries out the reaction H2O2 + AH2 = A + 2 H2O. Functionally, monomeric heme protein which primary function is to store oxygen and facilitate its diffusion within muscle tissues. Reversibly binds oxygen through a pentacoordinated heme iron and enables its timely and efficient release as needed during periods of heightened demand. Depending on the oxidative conditions of tissues and cells, and in addition to its ability to bind oxygen, it also has a nitrite reductase activity whereby it regulates the production of bioactive nitric oxide. Under stress conditions, like hypoxia and anoxia, it also protects cells against reactive oxygen species thanks to its pseudoperoxidase activity. This chain is Myoglobin (mb), found in Danio rerio (Zebrafish).